The chain runs to 581 residues: Ezrin (581 aa).

In terms of domain architecture, FERM spans 2-295 (PKPINVRVTT…GNHELYMRRR (294 aa)). The residue at position 60 (Lys-60) is an N6-acetyllysine. The [IL]-x-C-x-x-[DE] motif signature appears at 115–120 (IYCPPE). Tyr-146 carries the post-translational modification Phosphotyrosine; by PDGFR. Positions 244–581 (EIRNISFNDK…KQRIDEFEAM (338 aa)) are interaction with SCYL3. A coiled-coil region spans residues 302–462 (VQQMKAQARE…QDDLVKTREE (161 aa)). The interval 306–341 (KAQAREEKHQKQLERQQLETEKKRRETVEREKEQMM) is disordered. A compositionally biased stretch (basic and acidic residues) spans 308 to 341 (QAREEKHQKQLERQQLETEKKRRETVEREKEQMM). Tyr-354 carries the post-translational modification Phosphotyrosine; by PDGFR. At Ser-366 the chain carries Phosphoserine. A Phosphotyrosine modification is found at Tyr-476. A disordered region spans residues 534–560 (SQARDENKRTHNDIIHNENMRQGRDKY). The span at 535–560 (QARDENKRTHNDIIHNENMRQGRDKY) shows a compositional bias: basic and acidic residues. Thr-562 carries the post-translational modification Phosphothreonine; by ROCK2 and PKC/PRKCI.

Interacts with PALS1 and NHERF2. Found in a complex with EZR, PODXL and NHERF2. Interacts with MCC, PLEKHG6, PODXL, SCYL3/PACE1, NHERF1 and TMEM8B. Interacts (when phosphorylated) with FES/FPS. Interacts with dimeric S100P, the interaction may be activating through unmasking of F-actin binding sites. Identified in complexes that contain VIM, EZR, AHNAK, BFSP1, BFSP2, ANK2, PLEC, PRX and spectrin. Detected in a complex composed of at least EZR, AHNAK, PPL and PRX. Interacts with PDPN (via cytoplasmic domain); activates RHOA and promotes epithelial-mesenchymal transition. Interacts with SPN/CD43 cytoplasmic tail, CD44 and ICAM2. Interacts with SLC9A3; interaction targets SLC9A3 to the apical membrane. Interacts with SLC9A1; regulates interactions of SLC9A1 with cytoskeletal and promotes stress fiber formation. Interacts with CLIC5; may work together in a complex which also includes RDX and MYO6 to stabilize linkages between the plasma membrane and subjacent actin cytoskeleton at the base of stereocilia. Phosphorylated by tyrosine-protein kinases. Phosphorylation by ROCK2 suppresses the head-to-tail association of the N-terminal and C-terminal halves resulting in an opened conformation which is capable of actin and membrane-binding. In terms of processing, S-nitrosylation is induced by interferon-gamma and oxidatively-modified low-densitity lipoprotein (LDL(ox)) possibly implicating the iNOS-S100A8/9 transnitrosylase complex. As to expression, detected in eye lens fiber cells (at protein level).

The protein localises to the apical cell membrane. The protein resides in the cell projection. Its subcellular location is the microvillus membrane. It localises to the ruffle membrane. It is found in the cytoplasm. The protein localises to the cell cortex. The protein resides in the cytoskeleton. Its subcellular location is the microvillus. Its activity is regulated as follows. A head-to-tail association, of the N-terminal and C-terminal halves results in a closed conformation (inactive form) which is incapable of actin or membrane-binding. Its function is as follows. Probably involved in connections of major cytoskeletal structures to the plasma membrane. In epithelial cells, required for the formation of microvilli and membrane ruffles on the apical pole. Along with PLEKHG6, required for normal macropinocytosis. The sequence is that of Ezrin (EZR) from Bos taurus (Bovine).